A 92-amino-acid chain; its full sequence is PqqA binding protein (92 aa).

This sequence belongs to the PqqD family. As to quaternary structure, monomer. Interacts with PqqE.

It participates in cofactor biosynthesis; pyrroloquinoline quinone biosynthesis. Functions as a PqqA binding protein and presents PqqA to PqqE, in the pyrroloquinoline quinone (PQQ) biosynthetic pathway. The sequence is that of PqqA binding protein from Xanthomonas oryzae pv. oryzae (strain PXO99A).